A 205-amino-acid polypeptide reads, in one-letter code: uncharacterized protein (205 aa).

Residues A72 to R114 form a disordered region. Residues R90–L100 are compositionally biased toward polar residues. The span at T101 to D110 shows a compositional bias: low complexity.

This is an uncharacterized protein from Equus caballus (Horse).